Here is a 359-residue protein sequence, read N- to C-terminus: Glucose 1-dehydrogenase (359 aa).

C39 lines the Zn(2+) pocket. A substrate-binding site is contributed by T41. Zn(2+) contacts are provided by H64 and E65. E116 and E152 together coordinate substrate. Residue E152 participates in Zn(2+) binding. 183–186 lines the NADP(+) pocket; the sequence is AGPI.

Belongs to the zinc-containing alcohol dehydrogenase family. Glucose 1-dehydrogenase subfamily. Zn(2+) is required as a cofactor.

It catalyses the reaction D-glucose + NAD(+) = D-glucono-1,5-lactone + NADH + H(+). The enzyme catalyses D-glucose + NADP(+) = D-glucono-1,5-lactone + NADPH + H(+). Functionally, catalyzes the NAD(P)(+)-dependent oxidation of D-glucose to D-gluconate via gluconolactone. Can utilize both NAD(+) and NADP(+) as electron acceptor. Is involved in the degradation of glucose through a non-phosphorylative variant of the Entner-Doudoroff pathway. In Methanocella arvoryzae (strain DSM 22066 / NBRC 105507 / MRE50), this protein is Glucose 1-dehydrogenase.